Reading from the N-terminus, the 156-residue chain is Small ribosomal subunit protein uS7 (156 aa).

It belongs to the universal ribosomal protein uS7 family. As to quaternary structure, part of the 30S ribosomal subunit. Contacts proteins S9 and S11.

Its function is as follows. One of the primary rRNA binding proteins, it binds directly to 16S rRNA where it nucleates assembly of the head domain of the 30S subunit. Is located at the subunit interface close to the decoding center, probably blocks exit of the E-site tRNA. This chain is Small ribosomal subunit protein uS7, found in Mannheimia succiniciproducens (strain KCTC 0769BP / MBEL55E).